The chain runs to 257 residues: Transmembrane protein C257L (257 aa).

Transmembrane regions (helical) follow at residues 123–143 and 163–183; these read LELL…FTAL and IMIF…YVLV.

This sequence belongs to the asfivirus C257R family.

The protein resides in the host membrane. It is found in the virion. The protein is Transmembrane protein C257L of African swine fever virus (isolate Pig/Kenya/KEN-50/1950) (ASFV).